Reading from the N-terminus, the 517-residue chain is Ubiquitin carboxyl-terminal hydrolase 30 (517 aa).

Residues 1-35 (MLSSRAQAARTAADKALQRFLRTGAAVRYKVMKNW) lie on the Mitochondrial intermembrane side of the membrane. A helical transmembrane segment spans residues 36–56 (GVIGGIAAALAAGIYVIWGPI). Over 57–517 (TERKKRRKGL…QQGREYRSEE (461 aa)) the chain is Cytoplasmic. In terms of domain architecture, USP spans 68–502 (PGLVNLGNTC…SAYLLFYERV (435 aa)). Residue cysteine 77 is the Nucleophile of the active site. Residues 198–221 (MAPRQVTCHTRGSPHPTTNHWKSQ) form a disordered region. The span at 204 to 218 (TCHTRGSPHPTTNHW) shows a compositional bias: polar residues. Residues lysine 235 and lysine 289 each participate in a glycyl lysine isopeptide (Lys-Gly) (interchain with G-Cter in ubiquitin) cross-link. A disordered region spans residues 364–395 (SQHGPKATENPGSAPEVQDAQAAPKPGLSQPG). The active-site Proton acceptor is histidine 452.

Belongs to the peptidase C19 family. Post-translationally, ubiquitinated by parkin (PRKN) at Lys-235 and Lys-289, leading to its degradation.

It is found in the mitochondrion outer membrane. It catalyses the reaction Thiol-dependent hydrolysis of ester, thioester, amide, peptide and isopeptide bonds formed by the C-terminal Gly of ubiquitin (a 76-residue protein attached to proteins as an intracellular targeting signal).. With respect to regulation, inhibited by the diterpenoid derivative 15-oxospiramilactone (S3). In terms of biological role, deubiquitinating enzyme tethered to the mitochondrial outer membrane that acts as a key inhibitor of mitophagy by counteracting the action of parkin (PRKN): hydrolyzes ubiquitin attached by parkin on target proteins, such as RHOT1/MIRO1 and TOMM20, thereby blocking parkin's ability to drive mitophagy. Preferentially cleaves 'Lys-6'- and 'Lys-11'-linked polyubiquitin chains, 2 types of linkage that participate in mitophagic signaling. Does not cleave efficiently polyubiquitin phosphorylated at 'Ser-65'. Acts as negative regulator of mitochondrial fusion by mediating deubiquitination of MFN1 and MFN2. This chain is Ubiquitin carboxyl-terminal hydrolase 30 (Usp30), found in Mus musculus (Mouse).